The primary structure comprises 271 residues: Extracellular metalloprotease TRV_06892 (271 aa).

A signal peptide spans 1–19 (MRFSVLLTGLAAAGSIATA). An N-linked (GlcNAc...) asparagine glycan is attached at N136. H185 lines the Zn(2+) pocket. E186 is a catalytic residue. H189 contributes to the Zn(2+) binding site. N200 is a glycosylation site (N-linked (GlcNAc...) asparagine). The cysteines at positions 222 and 248 are disulfide-linked.

The protein belongs to the peptidase M43B family.

Its subcellular location is the secreted. Functionally, secreted metalloproteinase that allows assimilation of proteinaceous substrates. Plays a pivotal role as a pathogenicity determinant during infections and contributes to the ability of the pathogen to persist within the mammalian host. The protein is Extracellular metalloprotease TRV_06892 of Trichophyton verrucosum (strain HKI 0517).